Reading from the N-terminus, the 514-residue chain is 1-pyrroline-5-carboxylate dehydrogenase (514 aa).

Residues Glu286 and Cys320 contribute to the active site.

It belongs to the aldehyde dehydrogenase family. RocA subfamily.

It catalyses the reaction L-glutamate 5-semialdehyde + NAD(+) + H2O = L-glutamate + NADH + 2 H(+). It functions in the pathway amino-acid degradation; L-proline degradation into L-glutamate; L-glutamate from L-proline: step 2/2. This is 1-pyrroline-5-carboxylate dehydrogenase from Staphylococcus aureus (strain MSSA476).